Reading from the N-terminus, the 1456-residue chain is Sterol 3-beta-glucosyltransferase (1456 aa).

Positions Met1–Ser12 are enriched in basic and acidic residues. The tract at residues Met1 to Glu229 is disordered. Residues Arg13–Gly22 show a composition bias toward basic residues. A compositionally biased stretch (basic and acidic residues) spans Lys23–Thr48. Polar residues-rich tracts occupy residues His54–Phe63 and Arg109–Thr123. The GRAM 1 domain occupies Lys236 to Lys283. Positions Asp287–Phe384 constitute a PH domain. Disordered stretches follow at residues Leu500–Ala612 and Asn631–Ser691. A compositionally biased stretch (low complexity) spans Arg510 to Asp523. Composition is skewed to basic and acidic residues over residues Ala524–Asp536, Trp544–Arg557, and Arg571–Asp584. Composition is skewed to polar residues over residues Ser585 to Ala612 and Asn631 to Ser650. The GRAM 2 domain occupies Asp774–Lys840. UDP-alpha-D-glucose contacts are provided by Ser966, Arg967, Asp969, Ala1269, His1271, His1284, Ser1287, Gly1288, Thr1289, Asp1308, and Gln1309.

This sequence belongs to the glycosyltransferase 28 family.

It localises to the cytoplasm. The protein localises to the preautophagosomal structure membrane. It carries out the reaction a sterol + UDP-alpha-D-glucose = a sterol 3-beta-D-glucoside + UDP + H(+). The catalysed reaction is ergosterol + UDP-alpha-D-glucose = ergosteryl 3-beta-D-glucoside + UDP + H(+). Sterol glycosyltransferase responsible for the glycosylation of ergosterol to form ergosterol-glucoside. In Leptosphaeria maculans (Blackleg fungus), this protein is Sterol 3-beta-glucosyltransferase.